A 1507-amino-acid chain; its full sequence is Nonribosomal peptide synthetase ataP (1507 aa).

One can recognise a Carrier 1 domain in the interval 1–72; sequence MQINIRNEIA…DIISRSTGMY (72 aa). Ser33 carries the O-(pantetheine 4'-phosphoryl)serine modification. The disordered stretch occupies residues 98–119; it reads TPSPSPSGPSTGCPTPDTLDTT. Over residues 105–115 the composition is skewed to low complexity; the sequence is GPSTGCPTPDT. Residues 163–429 are condensation 1; that stretch reads TRMAWQQVLE…NRVFRQLVQL (267 aa). The segment at 514–893 is adenylation; it reads AAAENPEACA…GRNDRQIKLR (380 aa). Residues 988-1065 enclose the Carrier 2 domain; that stretch reads NEMSPTEQRV…DLSQRIDKLQ (78 aa). O-(pantetheine 4'-phosphoryl)serine is present on Ser1025. The interval 1099–1471 is condensation 2; sequence TSNTSFTVSF…MTALRLLIKN (373 aa).

It belongs to the NRP synthetase family.

Its pathway is mycotoxin biosynthesis. Nonribosomal peptide synthetase; part of the gene cluster that mediates the biosynthesis of acetylaranotin, a member of the epipolythiodioxopiperazine (ETP) class of toxins characterized by a disulfide-bridged cyclic dipeptide. The first step of acetylaranotin biosynthesis is performed by the NRPS ataP which produces diketopiperazine cyclo-L-Phe-L-Phe via the condensation of 2 phenylalanines (L-Phe). The ataC domain of ataTC then catalyzes the formation of bishydroxylation of cyclo-L-Phe-L-Phe. The glutathione S-transferase domain ataG in ataIMG further catalyzes the conjugation of two glutathiones to the bishydroxylated intermediate. Next, the dipeptidase ataJ removes the Glu residues. The following step is performed by the carbon sulfur lyase domain ataI of ataIMG which may convert the bis-cysteinyl adduct to yield an epidithiol intermediate. The ataT domain from ataTC then catalyzes the oxidation of the free dithiols, followed by a cyclization step catalyzed by the cytochrome P450 ataF. AtaF probably acts as an epoxidase to promote a dual epoxidation formation at C8 and C9 along with C8' and C9', followed by the spontaneous nucleophilic attack of the amide nitrogens N10 and N10' to yield an intermediate with the pyrrolidine partial structure. The final steps of acetylaranotin biosynthesis involve the acetylation and ring rearrangement of an epitetrathiodiketopiperazine intermediate to produce acetylaranotin. AtaH probably catalyzes the acetylation of epitetrathiodiketopiperazine to produce a diacetate and ataY is responsible for the formation of the dihydrooxepin moiety that converts the diacetate intermediate to acetylaranotin via acetylapoaranotin. Both enzymes could function independently in the absence of the other. The acetylaranotin bis-thiomethyltransferase ataS located outside of acetylaranotin gene cluster is the main thiomethyltransferase responsible for converting acetylaranotin and its related intermediates to their methylated forms. This chain is Nonribosomal peptide synthetase ataP, found in Aspergillus terreus (strain NIH 2624 / FGSC A1156).